Reading from the N-terminus, the 514-residue chain is Membrane-bound lytic murein transglycosylase F (514 aa).

A signal peptide spans 1 to 30 (MKKLKINYLFIGILTLLLAAALWPSIPWFG). A non-LT domain region spans residues 31–269 (KTENHVAAIQ…RIEEKYLGHG (239 aa)). The segment at 270–514 (DDFDYVDTRS…LFTPQKKEEK (245 aa)) is LT domain. Glu-314 is an active-site residue.

The protein in the N-terminal section; belongs to the bacterial solute-binding protein 3 family. In the C-terminal section; belongs to the transglycosylase Slt family.

The protein resides in the cell outer membrane. It catalyses the reaction Exolytic cleavage of the (1-&gt;4)-beta-glycosidic linkage between N-acetylmuramic acid (MurNAc) and N-acetylglucosamine (GlcNAc) residues in peptidoglycan, from either the reducing or the non-reducing ends of the peptidoglycan chains, with concomitant formation of a 1,6-anhydrobond in the MurNAc residue.. Its function is as follows. Murein-degrading enzyme that degrades murein glycan strands and insoluble, high-molecular weight murein sacculi, with the concomitant formation of a 1,6-anhydromuramoyl product. Lytic transglycosylases (LTs) play an integral role in the metabolism of the peptidoglycan (PG) sacculus. Their lytic action creates space within the PG sacculus to allow for its expansion as well as for the insertion of various structures such as secretion systems and flagella. This Salmonella arizonae (strain ATCC BAA-731 / CDC346-86 / RSK2980) protein is Membrane-bound lytic murein transglycosylase F.